We begin with the raw amino-acid sequence, 137 residues long: uncharacterized protein (137 aa).

The segment at alanine 116–glutamate 137 is disordered. The segment covering threonine 125–glutamate 137 has biased composition (polar residues).

This is an uncharacterized protein from Mycobacterium bovis (strain ATCC BAA-935 / AF2122/97).